Consider the following 484-residue polypeptide: MNATTEQEAIVKVLFTTTEQGLELPESKRLLLVPADIRRYGLSRVLNSESMLNTAAPIPFDFLVNGTFLRTTLEDYLKENGLPFEKTVTLQYVRSLVPPAYEASFEHDDWVSSVDLLSATSSAGKWSGSSFLQGQDRILSASYDGLLRIWNGSGQALATSSVVNRGPLCGLKSAKFMSSTKIAAAGLDRTVRIWDYTEADDHFSGQLKPTLELYGHRSIIESLGVDGSSRRILTACADGSIGLWTTSKKLAPEAPTALLPQTYATKRRKGSTTSANIIAQRGALSLIPVHSRPVSAAIFDPQNQHTAYSASQDHTLKVLDLTTSRVVSTITTSNALMSACYLSNKSAPLIAAGTSSRNVTLIDPRESAAATSVMTLRGHINVVSSVSASPDNEYSLVSGSHDGTCRIWDLRSVRPAAGKEETGLGSVGESVYLIERESLGDKKRPLAGEGVKVFDVQWDKTWGIVSGGEDKKVQINKGRNIISS.

Positions 11-94 are ubiquitin-like (UBL) domain; the sequence is VKVLFTTTEQ…EKTVTLQYVR (84 aa). WD repeat units lie at residues 121-160, 166-204, 215-254, 289-329, 331-372, 378-418, and 448-484; these read SSAG…LATS, GPLC…DHFS, GHRS…APEA, VHSR…VVST, TTSN…AATS, GHIN…PAAG, and GEGV…IISS.

It belongs to the WD repeat WDR12/YTM1 family. As to quaternary structure, component of the NOP7 complex, composed of ERB1, NOP7 and YTM1. The complex is held together by ERB1, which interacts with NOP7 via its N-terminal domain and with YTM1 via a high-affinity interaction between the seven-bladed beta-propeller domains of the 2 proteins. The NOP7 complex associates with the 66S pre-ribosome. Interacts (via UBL domain) with MDN1 (via VWFA/MIDAS domain).

The protein resides in the nucleus. It is found in the nucleolus. It localises to the nucleoplasm. Functionally, component of the NOP7 complex, which is required for maturation of the 25S and 5.8S ribosomal RNAs and formation of the 60S ribosome. The sequence is that of Ribosome biogenesis protein YTM1 from Pyricularia oryzae (strain 70-15 / ATCC MYA-4617 / FGSC 8958) (Rice blast fungus).